Reading from the N-terminus, the 100-residue chain is Urease subunit gamma (100 aa).

Belongs to the urease gamma subunit family. As to quaternary structure, heterotrimer of UreA (gamma), UreB (beta) and UreC (alpha) subunits. Three heterotrimers associate to form the active enzyme.

The protein localises to the cytoplasm. The enzyme catalyses urea + 2 H2O + H(+) = hydrogencarbonate + 2 NH4(+). It functions in the pathway nitrogen metabolism; urea degradation; CO(2) and NH(3) from urea (urease route): step 1/1. This chain is Urease subunit gamma, found in Prochlorococcus marinus (strain AS9601).